The primary structure comprises 667 residues: Bifunctional polymyxin resistance protein ArnA (667 aa).

The segment at 1–304 (MKAIVFAYHD…EMGIVTDVRL (304 aa)) is formyltransferase ArnAFT. The active-site Proton donor; for formyltransferase activity is the histidine 104. (6R)-10-formyltetrahydrofolate contacts are provided by residues arginine 114 and 136–140 (VKKAD). Residues 314–667 (RRTRVLILGV…TAAPKDELNA (354 aa)) form a dehydrogenase ArnADH region. Residues aspartate 347 and 368 to 369 (DI) contribute to the NAD(+) site. Residues alanine 393, tyrosine 398, and 432 to 433 (TS) each bind UDP-alpha-D-glucuronate. Glutamate 434 serves as the catalytic Proton acceptor; for decarboxylase activity. UDP-alpha-D-glucuronate contacts are provided by residues arginine 460, asparagine 492, 526 to 535 (KLVDGGAQKR), and tyrosine 613. Catalysis depends on arginine 619, which acts as the Proton donor; for decarboxylase activity.

The protein in the N-terminal section; belongs to the Fmt family. UDP-L-Ara4N formyltransferase subfamily. It in the C-terminal section; belongs to the NAD(P)-dependent epimerase/dehydratase family. UDP-glucuronic acid decarboxylase subfamily. In terms of assembly, homohexamer, formed by a dimer of trimers.

It carries out the reaction UDP-alpha-D-glucuronate + NAD(+) = UDP-beta-L-threo-pentopyranos-4-ulose + CO2 + NADH. The catalysed reaction is UDP-4-amino-4-deoxy-beta-L-arabinose + (6R)-10-formyltetrahydrofolate = UDP-4-deoxy-4-formamido-beta-L-arabinose + (6S)-5,6,7,8-tetrahydrofolate + H(+). Its pathway is nucleotide-sugar biosynthesis; UDP-4-deoxy-4-formamido-beta-L-arabinose biosynthesis; UDP-4-deoxy-4-formamido-beta-L-arabinose from UDP-alpha-D-glucuronate: step 1/3. It functions in the pathway nucleotide-sugar biosynthesis; UDP-4-deoxy-4-formamido-beta-L-arabinose biosynthesis; UDP-4-deoxy-4-formamido-beta-L-arabinose from UDP-alpha-D-glucuronate: step 3/3. The protein operates within bacterial outer membrane biogenesis; lipopolysaccharide biosynthesis. Functionally, bifunctional enzyme that catalyzes the oxidative decarboxylation of UDP-glucuronic acid (UDP-GlcUA) to UDP-4-keto-arabinose (UDP-Ara4O) and the addition of a formyl group to UDP-4-amino-4-deoxy-L-arabinose (UDP-L-Ara4N) to form UDP-L-4-formamido-arabinose (UDP-L-Ara4FN). The modified arabinose is attached to lipid A and is required for resistance to polymyxin and cationic antimicrobial peptides. This chain is Bifunctional polymyxin resistance protein ArnA, found in Yersinia pseudotuberculosis serotype O:3 (strain YPIII).